We begin with the raw amino-acid sequence, 198 residues long: MORN repeat-containing protein 4 homolog (198 aa).

Alanine 2 bears the N-acetylalanine mark. Residues 23-45 show a composition bias toward low complexity; it reads QHQQHPHQQGQHGHHQQGQGQSQ. The disordered stretch occupies residues 23-46; it reads QHQQHPHQQGQHGHHQQGQGQSQY. MORN repeat units follow at residues 64–87, 88–109, 111–132, and 134–153; these read YIGE…DGTR, YDGQ…ADGA, YEGE…ADGM, and YEGE…TFQD.

In terms of assembly, interacts with ninaC. Phosphorylated under dark conditions and is dephosphorylated by light exposure. Retina. Expressed primarily in the phototransducing compartment of photoreceptor cells, the rhabdomeres and its expression is dependent on ninaC protein (at protein level).

It is found in the membrane. The protein localises to the cell projection. The protein resides in the rhabdomere membrane. Its function is as follows. Plays a role in promoting axonal degeneration following neuronal injury by toxic insult or trauma. Organizes rhabdomeric components to suppress random activation of the phototransduction cascade and thus increases the signaling fidelity of dark-adapted photoreceptors. The rtp/ninaC complex is required for stability of inad and inac and the normal termination of phototransduction in the retina. This chain is MORN repeat-containing protein 4 homolog, found in Drosophila melanogaster (Fruit fly).